Reading from the N-terminus, the 200-residue chain is MARFRGSNWKKSRRLGISLSGTGKELEKRPYAPGQHGPNQRKKLSEYGLQLREKQKLRYLYGMTERQFRNTFDIAGKQHGVHGENFMILLASRLDAVVYSLGLARTRRQARQLVGHGHVEVDGRRVDIPSYSLKPGQVITVREKSQNLDIIKESVEINNFVPEYLDFDADSLKGTFVRFPERSELPAEINEQLIVEYYSR.

The S4 RNA-binding domain maps to Ser92–Val155.

The protein belongs to the universal ribosomal protein uS4 family. Part of the 30S ribosomal subunit. Contacts protein S5. The interaction surface between S4 and S5 is involved in control of translational fidelity.

Functionally, one of the primary rRNA binding proteins, it binds directly to 16S rRNA where it nucleates assembly of the body of the 30S subunit. In terms of biological role, with S5 and S12 plays an important role in translational accuracy. This chain is Small ribosomal subunit protein uS4, found in Staphylococcus haemolyticus (strain JCSC1435).